Consider the following 450-residue polypeptide: Interferon-related developmental regulator 1 (450 aa).

Positions 1–10 are enriched in basic residues; the sequence is MPKNKKRNTP. Residues 1-46 form a disordered region; it reads MPKNKKRNTPHRGGSGGGGSGAAATTAATAGGQHRNVQPFSDEDAS. The segment covering 22-32 has biased composition (low complexity); that stretch reads AAATTAATAGG.

This sequence belongs to the IFRD family. In terms of assembly, interacts with PSIP1/LEDGF.

Functionally, could play a role in regulating gene activity in the proliferative and/or differentiative pathways induced by NGF. May be an autocrine factor that attenuates or amplifies the initial ligand-induced signal. This is Interferon-related developmental regulator 1 (IFRD1) from Sus scrofa (Pig).